The primary structure comprises 163 residues: Nitrogen regulatory protein (163 aa).

Residues 12-156 (SVLNRECTRS…EELYQIITDT (145 aa)) form the PTS EIIA type-2 domain. The Tele-phosphohistidine intermediate role is filled by H73.

The protein localises to the cytoplasm. Seems to have a role in regulating nitrogen assimilation. This is Nitrogen regulatory protein (ptsN) from Escherichia coli (strain K12).